Consider the following 173-residue polypeptide: Dual-action ribosomal maturation protein DarP (173 aa).

This sequence belongs to the DarP family.

It is found in the cytoplasm. Its function is as follows. Member of a network of 50S ribosomal subunit biogenesis factors which assembles along the 30S-50S interface, preventing incorrect 23S rRNA structures from forming. Promotes peptidyl transferase center (PTC) maturation. The protein is Dual-action ribosomal maturation protein DarP of Pseudomonas putida (strain ATCC 700007 / DSM 6899 / JCM 31910 / BCRC 17059 / LMG 24140 / F1).